The sequence spans 82 residues: Putative ribonuclease VapC34 (82 aa).

Aspartate 4 is a Mg(2+) binding site.

Belongs to the PINc/VapC protein family. Mg(2+) is required as a cofactor.

Its function is as follows. Toxic component of a possible type II toxin-antitoxin (TA) system. A putative RNase. Its cognate antitoxin is VapB34. This Mycobacterium tuberculosis (strain CDC 1551 / Oshkosh) protein is Putative ribonuclease VapC34 (vapC34).